The primary structure comprises 380 residues: Chorismate synthase (380 aa).

Positions 40 and 46 each coordinate NADP(+). FMN-binding positions include 128 to 130, 247 to 248, glycine 292, 307 to 311, and arginine 333; these read RSS, QA, and KPIPT.

This sequence belongs to the chorismate synthase family. Homotetramer. FMNH2 is required as a cofactor.

The catalysed reaction is 5-O-(1-carboxyvinyl)-3-phosphoshikimate = chorismate + phosphate. It functions in the pathway metabolic intermediate biosynthesis; chorismate biosynthesis; chorismate from D-erythrose 4-phosphate and phosphoenolpyruvate: step 7/7. Catalyzes the anti-1,4-elimination of the C-3 phosphate and the C-6 proR hydrogen from 5-enolpyruvylshikimate-3-phosphate (EPSP) to yield chorismate, which is the branch point compound that serves as the starting substrate for the three terminal pathways of aromatic amino acid biosynthesis. This reaction introduces a second double bond into the aromatic ring system. The sequence is that of Chorismate synthase from Alkaliphilus metalliredigens (strain QYMF).